The sequence spans 105 residues: Large ribosomal subunit protein uL24 (105 aa).

Belongs to the universal ribosomal protein uL24 family. In terms of assembly, part of the 50S ribosomal subunit.

Functionally, one of two assembly initiator proteins, it binds directly to the 5'-end of the 23S rRNA, where it nucleates assembly of the 50S subunit. Its function is as follows. One of the proteins that surrounds the polypeptide exit tunnel on the outside of the subunit. This chain is Large ribosomal subunit protein uL24, found in Xylella fastidiosa (strain 9a5c).